A 287-amino-acid polypeptide reads, in one-letter code: MIFIFISLFAKIFFNYNDFFTNSHVKIMAKSLLNYQFHQVKQTINTPVLIFIHGLFGDMDNLGVIARAFSEHYSILRIDLRNHGHSFHSEKMNYQLMAEDVIAVIRHLNLSKVILIGHSMGGKTAMKITALCPELVEKLIVIDMSPMPYEGFGHKDVFNGLFAVKNAKPENRQQAKPILKQEINDEDVVQFMLKSFDVNSADCFRFNLTALFNNYANIMDWEKVRVFTPTLFIKGGNSSYIKIENSEKILEQFPNATAFTINGSGHWVHAEKPDFVIRAIKRFLNKN.

One can recognise an AB hydrolase-1 domain in the interval 47-273 (PVLIFIHGLF…SGHWVHAEKP (227 aa)). Catalysis depends on residues Ser119 and His266.

This sequence belongs to the DmpD/TodF/XylF esterase family.

The chain is Putative esterase/lipase HI_0193 from Haemophilus influenzae (strain ATCC 51907 / DSM 11121 / KW20 / Rd).